A 454-amino-acid polypeptide reads, in one-letter code: Uridine kinase (454 aa).

28-35 (GPSGSGKT) is a binding site for ATP.

This sequence belongs to the uridine kinase family.

It is found in the cytoplasm. The protein localises to the nucleus. It carries out the reaction uridine + ATP = UMP + ADP + H(+). The enzyme catalyses cytidine + ATP = CMP + ADP + H(+). It functions in the pathway pyrimidine metabolism; CTP biosynthesis via salvage pathway; CTP from cytidine: step 1/3. The protein operates within pyrimidine metabolism; UMP biosynthesis via salvage pathway; UMP from uridine: step 1/1. Its function is as follows. Catalyzes the conversion of uridine into UMP and cytidine into CMP in the pyrimidine salvage pathway. The polypeptide is Uridine kinase (urk1) (Schizosaccharomyces pombe (strain 972 / ATCC 24843) (Fission yeast)).